Here is a 396-residue protein sequence, read N- to C-terminus: Elongation factor Tu (396 aa).

Residues 11–205 form the tr-type G domain; that stretch reads KPHVNIGTIG…VIDEYIPTPV (195 aa). Positions 20–27 are G1; it reads GHVDHGKT. 20–27 contributes to the GTP binding site; that stretch reads GHVDHGKT. Threonine 27 provides a ligand contact to Mg(2+). Residues 61–65 are G2; it reads GITIN. Positions 82–85 are G3; the sequence is DAPG. GTP-binding positions include 82 to 86 and 137 to 140; these read DAPGH and NKTD. Residues 137 to 140 form a G4 region; it reads NKTD. The segment at 175–177 is G5; it reads SAL.

Belongs to the TRAFAC class translation factor GTPase superfamily. Classic translation factor GTPase family. EF-Tu/EF-1A subfamily. Monomer.

Its subcellular location is the cytoplasm. It catalyses the reaction GTP + H2O = GDP + phosphate + H(+). GTP hydrolase that promotes the GTP-dependent binding of aminoacyl-tRNA to the A-site of ribosomes during protein biosynthesis. The protein is Elongation factor Tu of Oenococcus oeni (strain ATCC BAA-331 / PSU-1).